The primary structure comprises 680 residues: MAAKINSLAALVSLQASHHHHXSTPFYFSPFSPHLSTTLTSRRRSLRSAVVAQSTAGTQSKAPSDVDLAAVSGQDRLLKVPISNIRNFCIIAHIDHGKSTLADKLLQMTGTVQKREMKEQFLDNMDLERERGITIKLQAARMRYVFENEPYCLNLIDTPGHVDFSYEVSRSLAACEGALLVVDASQGVEAQTLANVYLALENNLEIIPVLNKIDLPGAEPVRVSQEIEEVVGLDCSDAIHCSAKEGIGITEILNAIVKRIPPPCDTAERPLRALIFDSYYDPYRGVIVYFRVIDGTIKKGDRIYFMASKKDYFADEIGVLSPNQLQADELYAGEVGYLAASIRSVADARVGDTITHYGRKAENSLPGYEEATPMVFCGLFPVDADKFPDLRDALEKLQLNDAALKFEPETSSAMGFGFRCGFLGLLHMEIIQERLEREYNLTLITTAPSVVYRVNCINGDTVECSNPSLLPEPGKRTSIEEPYVKIEMLTPKDYIGPLMELAQDRRGEFKEMKFITENRASITYELPLAEMVGDFFDQLKSRSKGYASMEYSFLGYKESELIKLDIQINGERVEPLATIVHKDKAYAVGRALTQKLKELIPRQMFKVPIQACIGAKVIASESLSAIRKDVLSKCYGGDITRKKKLLKKQAEGKKRMKAIGKVDVPQEAFMAVLKLEKEVL.

A chloroplast-targeting transit peptide spans 1 to 51 (MAAKINSLAALVSLQASHHHHXSTPFYFSPFSPHLSTTLTSRRRSLRSAVV). A tr-type G domain is found at 83–264 (SNIRNFCIIA…AIVKRIPPPC (182 aa)). Residues 92–99 (AHIDHGKS), 157–161 (DTPGH), and 211–214 (NKID) each bind GTP.

This sequence belongs to the TRAFAC class translation factor GTPase superfamily. Classic translation factor GTPase family. LepA subfamily.

The protein localises to the plastid. It localises to the chloroplast. It carries out the reaction GTP + H2O = GDP + phosphate + H(+). Its function is as follows. Promotes chloroplast protein synthesis. May act as a fidelity factor of the translation reaction, by catalyzing a one-codon backward translocation of tRNAs on improperly translocated ribosomes. The protein is Translation factor GUF1 homolog, chloroplastic of Vitis vinifera (Grape).